A 453-amino-acid chain; its full sequence is Tryptophan dimethylallyltransferase cnsF (453 aa).

Residues 84 to 85 (IL) and E93 each bind L-tryptophan. Positions 104, 190, and 192 each coordinate substrate. Residues Y194 and R248 each coordinate L-tryptophan. R261, K263, Y265, Q347, and Y349 together coordinate substrate.

It belongs to the tryptophan dimethylallyltransferase family. In terms of assembly, homodimer.

It carries out the reaction L-tryptophan + dimethylallyl diphosphate = 4-(3-methylbut-2-enyl)-L-tryptophan + diphosphate. It participates in alkaloid biosynthesis. Tryptophan dimethylallyltransferase; part of the gene cluster that mediates the biosynthesis of communesins, a prominent class of indole alkaloids with great potential as pharmaceuticals. Communesins are biosynthesized by the coupling of tryptamine and aurantioclavine, two building blocks derived from L-tryptophan. The L-tryptophan decarboxylase cnsB converts L-tryptophan to tryptamine, whereas the tryptophan dimethylallyltransferase cnsF converts L-tryptophan to 4-dimethylallyl tryptophan which is further transformed to aurantioclavine by the aurantioclavine synthase cnsA, probably aided by the catalase cnsD. The cytochrome P450 monooxygenase cnsC catalyzes the heterodimeric coupling between the two different indole moieties, tryptamine and aurantioclavine, to construct vicinal quaternary stereocenters and yield the heptacyclic communesin scaffold. The O-methyltransferase cnsE then methylates the communesin scaffold to produce communesin K, the simplest characterized communesin that contains the heptacyclic core. The dioxygenase cnsJ converts communesin K into communesin I. Acylation to introduce the hexadienyl group at position N16 of communesin I by the acyltransferase cnsK leads to the production of communesin B. The hexadienyl group is produced by the highly reducing polyketide synthase cnsI, before being hydrolytically removed from cnsI by the serine hydrolase cnsH, converted into hexadienyl-CoA by the CoA ligase cnsG, and then transferred to communesin I by cnsK. Surprisingly, cnsK may also be a promiscuous acyltransferase that can tolerate a range of acyl groups, including acetyl-, propionyl-, and butyryl-CoA, which lead to communesins A, G and H respectively. The roles of the alpha-ketoglutarate-dependent dioxygenases cnsM and cnsP have still to be determined. The polypeptide is Tryptophan dimethylallyltransferase cnsF (Penicillium expansum (Blue mold rot fungus)).